Reading from the N-terminus, the 457-residue chain is Dolichol phosphate-mannose mannosyltransferase (457 aa).

The Cytoplasmic portion of the chain corresponds to 1-12; it reads MKRLAKAAFSQN. The chain crosses the membrane as a helical span at residues 13 to 33; the sequence is SLTAPIVSTFVYLISVVRVVL. At 34–91 the chain is on the extracellular side; it reads NGNWPVTSSDTAMFQHIGWMVFSGKRYYIDAWDPKPPLTLELATIIAYISNGDPHLQH. Residues 92–112 traverse the membrane as a helical segment; sequence TLSVVSTIVAGILLTYLISHI. At 113 to 120 the chain is on the cytoplasmic side; sequence TSEITGNQ. Residues 121 to 141 form a helical membrane-spanning segment; that stretch reads FAGLLSGIVFITFPVIHYSAV. The Extracellular portion of the chain corresponds to 142-173; it reads FGYEPKYFVFLFGLGSIYLSRNPKPILSGAAA. A helical transmembrane segment spans residues 174–194; it reads AASAGMWQFAIIFPIISFGII. Residues 195–211 are Cytoplasmic-facing; it reads SRRKSKDLILKYVFGAT. Residues 212-232 form a helical membrane-spanning segment; sequence IIAFISLLPIYLQGGLVAMTV. The Extracellular portion of the chain corresponds to 233 to 259; that stretch reads EVIIAPLYAGETQSFLYRLVKGVTHLK. Residues 260–280 form a helical membrane-spanning segment; the sequence is LMIPIALLGMAGILLGFLDDI. The Cytoplasmic portion of the chain corresponds to 281–283; sequence RER. The chain crosses the membrane as a helical span at residues 284–304; the sequence is WWVVGLLLWFCIQIFILDYDG. The Extracellular segment spans residues 305-307; the sequence is ADD. A helical membrane pass occupies residues 308 to 328; sequence LFLGIILVSMGIGFAFEKLST. Residues 329–337 are Cytoplasmic-facing; the sequence is KYESERINS. A helical membrane pass occupies residues 338–358; that stretch reads IVTAVVVCMLIWQVVTLGGVG. The Extracellular segment spans residues 359 to 457; it reads VITNPYSYSG…EEKCGKWRLP (99 aa).

The protein resides in the cell membrane. Its pathway is cell surface structure biogenesis; S-layer biogenesis. It functions in the pathway protein modification; protein glycosylation. In terms of biological role, involved in the assembly of a N-linked pentasaccharide that decorates the S-layer glycoprotein and flagellins. Transfers mannose, the terminal pentasaccharide residue, from its dedicated dolichol phosphate carrier to the protein-bound glycan comprising the first four subunits of the N-linked pentasaccharide. The polypeptide is Dolichol phosphate-mannose mannosyltransferase (aglS) (Haloferax volcanii (strain ATCC 29605 / DSM 3757 / JCM 8879 / NBRC 14742 / NCIMB 2012 / VKM B-1768 / DS2) (Halobacterium volcanii)).